Here is a 590-residue protein sequence, read N- to C-terminus: Aspartate--tRNA(Asp/Asn) ligase (590 aa).

E176 lines the L-aspartate pocket. The interval 200-203 (QLFK) is aspartate. L-aspartate-binding residues include R222 and H451. Position 222–224 (222–224 (RDE)) interacts with ATP. Position 485 (E485) interacts with ATP. R492 contacts L-aspartate. 537–540 (GIDR) contributes to the ATP binding site.

The protein belongs to the class-II aminoacyl-tRNA synthetase family. Type 1 subfamily. In terms of assembly, homodimer.

The protein resides in the cytoplasm. The catalysed reaction is tRNA(Asx) + L-aspartate + ATP = L-aspartyl-tRNA(Asx) + AMP + diphosphate. Aspartyl-tRNA synthetase with relaxed tRNA specificity since it is able to aspartylate not only its cognate tRNA(Asp) but also tRNA(Asn). Reaction proceeds in two steps: L-aspartate is first activated by ATP to form Asp-AMP and then transferred to the acceptor end of tRNA(Asp/Asn). This chain is Aspartate--tRNA(Asp/Asn) ligase, found in Ehrlichia chaffeensis (strain ATCC CRL-10679 / Arkansas).